Consider the following 417-residue polypeptide: XO lethal protein 1 (417 aa).

Residues 373-417 (VSPGETSSEGISDEHHYEEYDEDDIMEEEEAPSARQDDTYDEDEE) form a disordered region. Over residues 391-403 (EYDEDDIMEEEEA) the composition is skewed to acidic residues.

Belongs to the GHMP kinase family. Xol-1 subfamily.

The protein localises to the nucleus. Functionally, sex-determining factor that is required for sexual differentiation and X chromosome dosage compensation to promote male development. High expression during gastrulation triggers male development, while low expression at that time triggers hermaphrodite development. Although related to GHMP kinase, its mode of action remains unclear. The polypeptide is XO lethal protein 1 (Caenorhabditis elegans).